A 206-amino-acid polypeptide reads, in one-letter code: Adenine phosphoribosyltransferase (206 aa).

This sequence belongs to the purine/pyrimidine phosphoribosyltransferase family. Homodimer.

It is found in the cytoplasm. The enzyme catalyses AMP + diphosphate = 5-phospho-alpha-D-ribose 1-diphosphate + adenine. It functions in the pathway purine metabolism; AMP biosynthesis via salvage pathway; AMP from adenine: step 1/1. Catalyzes a salvage reaction resulting in the formation of AMP, that is energically less costly than de novo synthesis. The polypeptide is Adenine phosphoribosyltransferase (Rhodopirellula baltica (strain DSM 10527 / NCIMB 13988 / SH1)).